We begin with the raw amino-acid sequence, 945 residues long: Isoleucine--tRNA ligase (945 aa).

A 'HIGH' region motif is present at residues 67–77 (PYANGQIHLGH). Glu573 lines the L-isoleucyl-5'-AMP pocket. The 'KMSKS' region signature appears at 614 to 618 (KMSKS). An ATP-binding site is contributed by Lys617. Residues Cys908, Cys911, Cys928, and Cys931 each coordinate Zn(2+).

This sequence belongs to the class-I aminoacyl-tRNA synthetase family. IleS type 1 subfamily. As to quaternary structure, monomer. It depends on Zn(2+) as a cofactor.

It localises to the cytoplasm. The enzyme catalyses tRNA(Ile) + L-isoleucine + ATP = L-isoleucyl-tRNA(Ile) + AMP + diphosphate. Functionally, catalyzes the attachment of isoleucine to tRNA(Ile). As IleRS can inadvertently accommodate and process structurally similar amino acids such as valine, to avoid such errors it has two additional distinct tRNA(Ile)-dependent editing activities. One activity is designated as 'pretransfer' editing and involves the hydrolysis of activated Val-AMP. The other activity is designated 'posttransfer' editing and involves deacylation of mischarged Val-tRNA(Ile). This is Isoleucine--tRNA ligase from Acinetobacter baylyi (strain ATCC 33305 / BD413 / ADP1).